The primary structure comprises 381 residues: MHLPAILLCALWSAVVAETSDDYELMYVNLDNEIDNGLHPTEDPTPCDCRQEHSEWDKLFIMLENSQMREGMLLQATDDVLRGELQRLRAELGRLAGGMARPCAAGGPADARLVRALEPLLQESRDASLRLARLEDAEARRPEATVPGLGAVLEELRRTRADLSAVQSWVARHWLPAGCETAIFFPMRSKKIFGSVHPVRPMKLESFSTCIWVKATDVLNKTILFSYGTKWNPYEIQLYLSSQSLVLVVGGKENKLAADTVVSLGRWSHLCGTWSSEQGSMSLWANGELVATTVEMAKSHSVPEGGLLQIGQEKNGCCVGGGFDESLAFSGRITGFNIWDRVLSEEEIRASGGVESCHIRGNVVGWGVTEIQAHGGAQYVS.

The signal sequence occupies residues 1–17; sequence MHLPAILLCALWSAVVA. Intrachain disulfides connect cysteine 179–cysteine 357 and cysteine 210–cysteine 271. Positions 179 to 381 constitute a Pentraxin (PTX) domain; that stretch reads CETAIFFPMR…QAHGGAQYVS (203 aa). Residue asparagine 220 is glycosylated (N-linked (GlcNAc...) asparagine).

In terms of assembly, homooctamer; disulfide-linked. Binds to C1q.

It is found in the secreted. Plays a role in the regulation of innate resistance to pathogens, inflammatory reactions, possibly clearance of self-components and female fertility. The polypeptide is Pentraxin-related protein PTX3 (Ptx3) (Mus musculus (Mouse)).